The following is an 82-amino-acid chain: Probable [Fe-S]-dependent transcriptional repressor (82 aa).

4 residues coordinate iron-sulfur cluster: Cys-56, Cys-61, Cys-64, and Cys-71.

The protein belongs to the FeoC family.

May function as a transcriptional regulator that controls feoABC expression. This is Probable [Fe-S]-dependent transcriptional repressor from Yersinia enterocolitica serotype O:8 / biotype 1B (strain NCTC 13174 / 8081).